A 575-amino-acid chain; its full sequence is MKIYYNNVCPNCSGRISNERLIKGLPCENDYPYEEGTIEQVYEYLKENNKLKDWANIYNIEKAKKEFEEFFYKAVNNKPWSAQRAWFIRAYKGYSFSIIAPTGMGKTTFALVNALYWGKKGKKVYIIVPTRTLVKQLYEKINVFAERVGFDNIIVAYYGNNKQKKEAKELIKDGAFSILITSNQFLSRNFDLLKNNYFDIIFADDVDSIMKSSKNIDRILYLLGFSETTIEKAMQLIKLKISGKDLEKIRKMEEQLKELVRKEQRGILIAASATGSMRGLRVKLFRELLGFEVGAAKTTIRNIIDVYTEMRDYKKQTLELIKKLGNGGLVFVPTDYGIEKAEEIAQYLKENNIKAEAFYSGKSIELLDKYANKELDVLVGVAHYYGLIVRGIDLPHVVKYAIFVGIPRFRFSAKEKETKIGRILLLASTLSDYADEEFKKKLNTTYNMIKRVSTGALKMVEEAIEQNKELDGFLEELRKNIIYLRDKSFELINREDIIKKLEENPFIALERGDGINILIPDVKTYIQASGRTSRMYPGGITKGLSIILSDNEKLLRALEFKLKLLGIDLHPGSSS.

An RG N-terminal-type; degenerate zinc finger spans residues 1-39 (MKIYYNNVCPNCSGRISNERLIKGLPCENDYPYEEGTIE). Residues Gln-83 and 100–107 (APTGMGKT) each bind ATP. Residues 87–247 (FIRAYKGYSF…KLKISGKDLE (161 aa)) form the Helicase ATP-binding domain. Residues 204–207 (DDVD) carry the DEAD box motif. Positions 316–465 (QTLELIKKLG…ALKMVEEAIE (150 aa)) constitute a Helicase C-terminal domain.

It belongs to the DEAD box helicase family. DDVD subfamily. As to quaternary structure, heterodimer of an RgyA and RgyB subunit.

It is found in the cytoplasm. The enzyme catalyses ATP + H2O = ADP + phosphate + H(+). Its function is as follows. Modifies the topological state of DNA by introducing positive supercoils in an ATP-dependent process. Binds to single-stranded DNA, transiently cleaves and then rejoins the end, introducing a positive supercoil in the process. The scissile phosphodiester is attacked by the catalytic tyrosine of the enzyme, resulting in the formation of a DNA-(5'-phosphotyrosyl)-enzyme intermediate. Probably involved in rewinding DNA strands in regions of the chromosome that have opened up to allow replication, transcription, DNA repair or for DNA protection. Reconstituted holoenzyme binds dsDNA a bit better than ssDNA, this subunit preferentially binds dsDNA. In isolation this subunit has DNA-stimulated ATPase activity that is stimulated by topoisomerase-domain containing RgyA. This subunit inhibits the relaxation activity of the topoisomerase subunit while promoting positive supercoiling. The polypeptide is Reverse gyrse subunit B (Nanoarchaeum equitans (strain Kin4-M)).